Reading from the N-terminus, the 933-residue chain is Serine/threonine-protein kinase EDR1 (933 aa).

The segment covering 1–10 (MKHIFKKLHR) has biased composition (basic residues). Disordered regions lie at residues 1-74 (MKHI…ADYM), 342-424 (CNSN…TAIG), 527-550 (HRDP…AISS), and 604-650 (HGQQ…YRND). The span at 37–48 (NPPQATPSSVTE) shows a compositional bias: polar residues. The span at 53-68 (AGATSSMASPAPTAAS) shows a compositional bias: low complexity. A compositionally biased stretch (polar residues) spans 342–356 (CNSNGNKFPTAQFSN). The span at 367 to 378 (SSHSSMANYSSS) shows a compositional bias: low complexity. Positions 379–389 (LDRRTEAERTD) are enriched in basic and acidic residues. Over residues 404–413 (SSPSSVTSST) the composition is skewed to low complexity. The span at 533–550 (GNTQSSYATSSSNGAISS) shows a compositional bias: polar residues. Residues 607 to 621 (QNDESHIHDHRKYTS) show a composition bias toward basic and acidic residues. Residues 669–925 (LVIAERIGLG…QLTEVLKPLN (257 aa)) form the Protein kinase domain. ATP is bound by residues 675–683 (IGLGSYGEV) and K696. D792 serves as the catalytic Proton acceptor.

The protein belongs to the protein kinase superfamily. TKL Ser/Thr protein kinase family. RAF subfamily. In terms of assembly, interacts with KEG. Binds and recruited by EDR4 at the powdery mildew (e.g. G.cichoracearum) penetration site on the plasma membrane. Autophosphorylated.

It localises to the cell membrane. The protein resides in the endosome. It is found in the nucleus. Its subcellular location is the endoplasmic reticulum. The protein localises to the golgi apparatus. It localises to the trans-Golgi network. The protein resides in the early endosome. It carries out the reaction L-seryl-[protein] + ATP = O-phospho-L-seryl-[protein] + ADP + H(+). It catalyses the reaction L-threonyl-[protein] + ATP = O-phospho-L-threonyl-[protein] + ADP + H(+). In terms of biological role, MAPKKK serine/threonine-protein kinase involved in the regulation of a MAP kinase cascade (probably including MPK3 and MPK6) that negatively regulates salicylic acid- (SA-) dependent defense responses, abscisic acid (ABA) signaling, and ethylene-induced senescence. Also modulates stress response (e.g. drought) signaling and cell death, in an ORE9-dependent manner. Functions at a point of cross talk between ethylene, ABA and SA signaling that impinges on senescence and cell death. On the other hand, it confers sensitivity to various pathogens such as the fungus E.cichoracearum, the oomycete H.parasitica and the bacteria P.syringae pv. tomato DC3000. Required for resistance to some hemibiotrophic/necrotrophic fungal pathogens (e.g. C.gloeosporioides, C.higginsianum and A.brassicicola) through the induction of defensin expression, probably by repressing MYC2, an inhibitor of defensin genes (PDFs). Together with KEG, may regulate endocytic trafficking and/or the formation of signaling complexes on trans-Golgi network (TGN)/ early endosome (EE) vesicles during stress responses. The protein is Serine/threonine-protein kinase EDR1 (EDR1) of Arabidopsis thaliana (Mouse-ear cress).